The sequence spans 418 residues: Transcription termination factor Rho (418 aa).

A Rho RNA-BD domain is found at 48–123 (DIYGDGVLEI…LKVNDINFDR (76 aa)). Residues 169–174 (GKGQRG), 181–186 (KAGKTM), and R212 contribute to the ATP site.

Belongs to the Rho family. As to quaternary structure, homohexamer. The homohexamer assembles into an open ring structure.

In terms of biological role, facilitates transcription termination by a mechanism that involves Rho binding to the nascent RNA, activation of Rho's RNA-dependent ATPase activity, and release of the mRNA from the DNA template. This chain is Transcription termination factor Rho, found in Allochromatium vinosum (strain ATCC 17899 / DSM 180 / NBRC 103801 / NCIMB 10441 / D) (Chromatium vinosum).